A 152-amino-acid chain; its full sequence is CASP-like protein 5C1 (152 aa).

Over 1–12 (MVRTTASFGTSS) the chain is Cytoplasmic. A helical membrane pass occupies residues 13-33 (SFVLRLGQTLFSSASLLFMCF). At 34–44 (NDDEDFYAYTT) the chain is on the extracellular side. A helical membrane pass occupies residues 45-65 (FCYLVTVMGLVTPWSVTLALM). Topologically, residues 66–80 (EAYSILVKKLPMQAT) are cytoplasmic. The chain crosses the membrane as a helical span at residues 81–101 (VISVIVAGDFVLSFLSLGGAC). Over 102–126 (STASVAVLLMDAGEKQCDRYKLSAT) the chain is Extracellular. A helical membrane pass occupies residues 127–147 (MAFLSSFLSFASTFFNFCLLP). Topologically, residues 148-152 (SLMSH) are cytoplasmic.

Belongs to the Casparian strip membrane proteins (CASP) family. Homodimer and heterodimers.

The protein localises to the cell membrane. This is CASP-like protein 5C1 from Arabidopsis thaliana (Mouse-ear cress).